The primary structure comprises 124 residues: Small ribosomal subunit protein uS12 (124 aa).

The disordered stretch occupies residues 1 to 28; it reads MPTISQLIGSERKRLTRKTKSPALKSCP. The residue at position 89 (Asp-89) is a 3-methylthioaspartic acid. Positions 104–124 are disordered; that stretch reads TAGVKDRRQSRSKYGAKAPKD.

The protein belongs to the universal ribosomal protein uS12 family. In terms of assembly, part of the 30S ribosomal subunit. Contacts proteins S8 and S17. May interact with IF1 in the 30S initiation complex.

With S4 and S5 plays an important role in translational accuracy. Functionally, interacts with and stabilizes bases of the 16S rRNA that are involved in tRNA selection in the A site and with the mRNA backbone. Located at the interface of the 30S and 50S subunits, it traverses the body of the 30S subunit contacting proteins on the other side and probably holding the rRNA structure together. The combined cluster of proteins S8, S12 and S17 appears to hold together the shoulder and platform of the 30S subunit. The protein is Small ribosomal subunit protein uS12 of Prochlorococcus marinus (strain MIT 9312).